The following is a 785-amino-acid chain: uncharacterized protein (785 aa).

A compositionally biased stretch (polar residues) spans 53 to 65; the sequence is KNTLTGSHGSNDL. The interval 53-162 is disordered; it reads KNTLTGSHGS…RKAADEQGPI (110 aa). The segment covering 66–79 has biased composition (acidic residues); sequence ATDESLDSPEDEEA. Polar residues predominate over residues 81-94; the sequence is SPLQLGTPTSTTSG. Serine 215 is subject to Phosphoserine. Disordered regions lie at residues 571-590 and 631-657; these read KVVD…TSVN and DSSG…RIQF. Acidic residues predominate over residues 575–584; it reads SDDEESDSDE. Serine 667 carries the phosphoserine modification. The disordered stretch occupies residues 693–785; the sequence is DPKMKFTSHP…FGSIFKKVFG (93 aa). Basic residues predominate over residues 725–739; sequence RKAHHHHHHHNHVSR. Residues 776-785 show a composition bias toward low complexity; that stretch reads FGSIFKKVFG.

This is an uncharacterized protein from Saccharomyces cerevisiae (strain ATCC 204508 / S288c) (Baker's yeast).